Here is a 282-residue protein sequence, read N- to C-terminus: Fibrinogen-like protein A (282 aa).

The N-terminal stretch at 1–24 (MFSFIMKAAILLILVGCISFCISS) is a signal peptide. The Fibrinogen C-terminal domain maps to 61 to 281 (SHSPEYPRDC…FAEMKLRNRS (221 aa)). Cystine bridges form between Cys70-Cys101 and Cys224-Cys240.

The sequence is that of Fibrinogen-like protein A from Apostichopus parvimensis (Warty sea cucumber).